The chain runs to 697 residues: Putative flagellar export/assembly protein LfhA (697 aa).

The next 7 helical transmembrane spans lie at 19-39, 40-60, 66-86, 116-136, 204-224, 242-262, and 280-302; these read VPLVILCILAMVILPLPPALL, DILFTFNIVLAVMVLLVAVSA, FSLFPTILLITTLMRLTLNVA, GNFVVGFVVFIILMIINFIVV, AIAGMMILAINLIGGVCIGIF, IGDGLVAQIPSLLLSTAAAII, and LLASPSVLYTATGIMFVLAVVPG.

This sequence belongs to the FHIPEP (flagella/HR/invasion proteins export pore) family.

Its subcellular location is the cell inner membrane. In terms of biological role, part of the flagellar gene cluster Flag-2. However, the Flag-2 flagellar system could be inactive in strain 042 due to a frameshift in lfgC. This Escherichia coli O44:H18 (strain 042 / EAEC) protein is Putative flagellar export/assembly protein LfhA.